Here is a 476-residue protein sequence, read N- to C-terminus: Adenosylhomocysteinase (476 aa).

Substrate contacts are provided by T67, D142, and E202. T203 to T205 lines the NAD(+) pocket. Substrate contacts are provided by K232 and D236. NAD(+)-binding positions include N237, G266 to G271, E289, N324, I345 to H347, and N390.

It belongs to the adenosylhomocysteinase family. Requires NAD(+) as cofactor.

Its subcellular location is the cytoplasm. It carries out the reaction S-adenosyl-L-homocysteine + H2O = L-homocysteine + adenosine. It functions in the pathway amino-acid biosynthesis; L-homocysteine biosynthesis; L-homocysteine from S-adenosyl-L-homocysteine: step 1/1. Functionally, may play a key role in the regulation of the intracellular concentration of adenosylhomocysteine. In Prochlorococcus marinus (strain MIT 9313), this protein is Adenosylhomocysteinase.